Here is a 607-residue protein sequence, read N- to C-terminus: MALLIITALVFSSLWSSVSPDAQGDALFALRSSLRASPEQLSDWNQNQVDPCTWSQVICDDKKHVTSVTLSYMNFSSGTLSSGIGILTTLKTLTLKGNGIMGGIPESIGNLSSLTSLDLEDNHLTDRIPSTLGNLKNLQFLTLSRNNLNGSIPDSLTGLSKLINILLDSNNLSGEIPQSLFKIPKYNFTANNLSCGGTFPQPCVTESSPSGDSSSRKTGIIAGVVSGIAVILLGFFFFFFCKDKHKGYKRDVFVDVAGEVDRRIAFGQLRRFAWRELQLATDEFSEKNVLGQGGFGKVYKGLLSDGTKVAVKRLTDFERPGGDEAFQREVEMISVAVHRNLLRLIGFCTTQTERLLVYPFMQNLSVAYCLREIKPGDPVLDWFRRKQIALGAARGLEYLHEHCNPKIIHRDVKAANVLLDEDFEAVVGDFGLAKLVDVRRTNVTTQVRGTMGHIAPECISTGKSSEKTDVFGYGIMLLELVTGQRAIDFSRLEEEDDVLLLDHVKKLEREKRLEDIVDKKLDEDYIKEEVEMMIQVALLCTQAAPEERPAMSEVVRMLEGEGLAERWEEWQNLEVTRQEEFQRLQRRFDWGEDSINNQDAIELSGGR.

Residues 1–24 form the signal peptide; sequence MALLIITALVFSSLWSSVSPDAQG. The Extracellular portion of the chain corresponds to 25–219; it reads DALFALRSSL…SGDSSSRKTG (195 aa). Asparagine 74 and asparagine 110 each carry an N-linked (GlcNAc...) asparagine glycan. LRR repeat units follow at residues 87–111, 112–135, 137–159, and 160–183; these read LTTL…IGNL, SSLT…LGNL, NLQF…LTGL, and SKLI…LFKI. Residues asparagine 149, asparagine 171, asparagine 187, and asparagine 192 are each glycosylated (N-linked (GlcNAc...) asparagine). The chain crosses the membrane as a helical span at residues 220–240; it reads IIAGVVSGIAVILLGFFFFFF. Topologically, residues 241-607 are cytoplasmic; sequence CKDKHKGYKR…QDAIELSGGR (367 aa). At threonine 281 the chain carries Phosphothreonine. The 285-residue stretch at 284–568 folds into the Protein kinase domain; the sequence is FSEKNVLGQG…EGEGLAERWE (285 aa). 290–298 is an ATP binding site; that stretch reads LGQGGFGKV. Residue threonine 307 is modified to Phosphothreonine. Lysine 312 provides a ligand contact to ATP. Serine 365 is subject to Phosphoserine. The active-site Proton acceptor is aspartate 411. Phosphothreonine is present on residues threonine 444, threonine 445, and threonine 450. Serine 460 bears the Phosphoserine mark. Threonine 461 is subject to Phosphothreonine. Serine 465 is subject to Phosphoserine. The residue at position 541 (threonine 541) is a Phosphothreonine.

The protein belongs to the protein kinase superfamily. Ser/Thr protein kinase family.

Its subcellular location is the cell membrane. It carries out the reaction L-seryl-[protein] + ATP = O-phospho-L-seryl-[protein] + ADP + H(+). The catalysed reaction is L-threonyl-[protein] + ATP = O-phospho-L-threonyl-[protein] + ADP + H(+). This Arabidopsis thaliana (Mouse-ear cress) protein is Probable LRR receptor-like serine/threonine-protein kinase At5g65240.